A 133-amino-acid polypeptide reads, in one-letter code: Mitochondrial import inner membrane translocase subunit TIM17-3 (133 aa).

The next 4 membrane-spanning stretches (helical) occupy residues 15–35, 63–83, 90–105, and 115–128; these read IVNA…VYHF, GGTF…LVRI, WNSI…VLSI, and SAVM…VLNP.

It belongs to the Tim17/Tim22/Tim23 family. As to quaternary structure, component of the TIM17:23 complex at least composed of TIM23, TIM17 and TIM50. The complex interacts with the TIM44 component of the PAM complex. As to expression, expressed in cotyledons, roots, flowers and leaves.

The protein localises to the mitochondrion inner membrane. In terms of biological role, essential component of the TIM17:23 complex, a complex that mediates the translocation of transit peptide-containing proteins across the mitochondrial inner membrane. Links the inner and outer membranes. The protein is Mitochondrial import inner membrane translocase subunit TIM17-3 (TIM17-3) of Arabidopsis thaliana (Mouse-ear cress).